We begin with the raw amino-acid sequence, 351 residues long: Selenide, water dikinase (351 aa).

Residue Sec15 is part of the active site. Residue Sec15 is a non-standard amino acid, selenocysteine. ATP-binding positions include Lys18 and 47 to 49 (DNE). Asp50 contacts Mg(2+). ATP-binding positions include Asp67, Asp90, and 138 to 140 (GHS). Asp90 serves as a coordination point for Mg(2+). Asp227 provides a ligand contact to Mg(2+).

It belongs to the selenophosphate synthase 1 family. Class I subfamily. In terms of assembly, homodimer. Mg(2+) is required as a cofactor.

It carries out the reaction hydrogenselenide + ATP + H2O = selenophosphate + AMP + phosphate + 2 H(+). Its function is as follows. Synthesizes selenophosphate from selenide and ATP. The sequence is that of Selenide, water dikinase from Nitratidesulfovibrio vulgaris (strain DP4) (Desulfovibrio vulgaris).